A 219-amino-acid chain; its full sequence is Guanylate kinase (219 aa).

Residues 15 to 194 (GLMFVLSSPS…AFAEVHSILK (180 aa)) form the Guanylate kinase-like domain. 22 to 29 (SPSGAGKT) contacts ATP.

This sequence belongs to the guanylate kinase family.

It is found in the cytoplasm. The catalysed reaction is GMP + ATP = GDP + ADP. Its function is as follows. Essential for recycling GMP and indirectly, cGMP. This chain is Guanylate kinase, found in Rhodopseudomonas palustris (strain BisB18).